Reading from the N-terminus, the 208-residue chain is Large ribosomal subunit protein uL3c (208 aa).

The interval 129–165 (TRGPMTHGSKNHREPGSIGQGSTPGKVHKGKKMAGRL) is disordered.

It belongs to the universal ribosomal protein uL3 family. As to quaternary structure, part of the 50S ribosomal subunit.

The protein resides in the plastid. It localises to the chloroplast. Its function is as follows. One of the primary rRNA binding proteins, it binds directly near the 3'-end of the 23S rRNA, where it nucleates assembly of the 50S subunit. The polypeptide is Large ribosomal subunit protein uL3c (rpl3) (Rhodomonas salina (Cryptomonas salina)).